The chain runs to 214 residues: ATP phosphoribosyltransferase (214 aa).

Belongs to the ATP phosphoribosyltransferase family. Short subfamily. In terms of assembly, heteromultimer composed of HisG and HisZ subunits.

It is found in the cytoplasm. The enzyme catalyses 1-(5-phospho-beta-D-ribosyl)-ATP + diphosphate = 5-phospho-alpha-D-ribose 1-diphosphate + ATP. The protein operates within amino-acid biosynthesis; L-histidine biosynthesis; L-histidine from 5-phospho-alpha-D-ribose 1-diphosphate: step 1/9. Functionally, catalyzes the condensation of ATP and 5-phosphoribose 1-diphosphate to form N'-(5'-phosphoribosyl)-ATP (PR-ATP). Has a crucial role in the pathway because the rate of histidine biosynthesis seems to be controlled primarily by regulation of HisG enzymatic activity. The protein is ATP phosphoribosyltransferase of Leptothrix cholodnii (strain ATCC 51168 / LMG 8142 / SP-6) (Leptothrix discophora (strain SP-6)).